The chain runs to 938 residues: Isoleucine--tRNA ligase (938 aa).

Residues 58 to 68 (PYANGNIHLGH) carry the 'HIGH' region motif. Residue Glu562 coordinates L-isoleucyl-5'-AMP. A 'KMSKS' region motif is present at residues 603–607 (KMSKS). Residue Lys606 coordinates ATP. Zn(2+)-binding residues include Cys901, Cys904, Cys921, and Cys924.

It belongs to the class-I aminoacyl-tRNA synthetase family. IleS type 1 subfamily. In terms of assembly, monomer. Zn(2+) serves as cofactor.

It is found in the cytoplasm. The enzyme catalyses tRNA(Ile) + L-isoleucine + ATP = L-isoleucyl-tRNA(Ile) + AMP + diphosphate. Its function is as follows. Catalyzes the attachment of isoleucine to tRNA(Ile). As IleRS can inadvertently accommodate and process structurally similar amino acids such as valine, to avoid such errors it has two additional distinct tRNA(Ile)-dependent editing activities. One activity is designated as 'pretransfer' editing and involves the hydrolysis of activated Val-AMP. The other activity is designated 'posttransfer' editing and involves deacylation of mischarged Val-tRNA(Ile). In Glaesserella parasuis serovar 5 (strain SH0165) (Haemophilus parasuis), this protein is Isoleucine--tRNA ligase.